Reading from the N-terminus, the 432-residue chain is Gamma-glutamyl phosphate reductase (432 aa).

The protein belongs to the gamma-glutamyl phosphate reductase family.

The protein resides in the cytoplasm. It catalyses the reaction L-glutamate 5-semialdehyde + phosphate + NADP(+) = L-glutamyl 5-phosphate + NADPH + H(+). It participates in amino-acid biosynthesis; L-proline biosynthesis; L-glutamate 5-semialdehyde from L-glutamate: step 2/2. Catalyzes the NADPH-dependent reduction of L-glutamate 5-phosphate into L-glutamate 5-semialdehyde and phosphate. The product spontaneously undergoes cyclization to form 1-pyrroline-5-carboxylate. The polypeptide is Gamma-glutamyl phosphate reductase (Corynebacterium melassecola).